The chain runs to 233 residues: 5'-methylthioadenosine/S-adenosylhomocysteine nucleosidase (233 aa).

The active-site Proton acceptor is glutamate 12. Residues glycine 78, isoleucine 152, and 173-174 contribute to the substrate site; that span reads ME. The active-site Proton donor is aspartate 197.

Belongs to the PNP/UDP phosphorylase family. MtnN subfamily. Homodimer.

It catalyses the reaction S-adenosyl-L-homocysteine + H2O = S-(5-deoxy-D-ribos-5-yl)-L-homocysteine + adenine. The enzyme catalyses S-methyl-5'-thioadenosine + H2O = 5-(methylsulfanyl)-D-ribose + adenine. It carries out the reaction 5'-deoxyadenosine + H2O = 5-deoxy-D-ribose + adenine. The protein operates within amino-acid biosynthesis; L-methionine biosynthesis via salvage pathway; S-methyl-5-thio-alpha-D-ribose 1-phosphate from S-methyl-5'-thioadenosine (hydrolase route): step 1/2. In terms of biological role, catalyzes the irreversible cleavage of the glycosidic bond in both 5'-methylthioadenosine (MTA) and S-adenosylhomocysteine (SAH/AdoHcy) to adenine and the corresponding thioribose, 5'-methylthioribose and S-ribosylhomocysteine, respectively. Also cleaves 5'-deoxyadenosine, a toxic by-product of radical S-adenosylmethionine (SAM) enzymes, into 5-deoxyribose and adenine. Thus, is required for in vivo function of the radical SAM enzymes biotin synthase and lipoic acid synthase, that are inhibited by 5'-deoxyadenosine accumulation. The chain is 5'-methylthioadenosine/S-adenosylhomocysteine nucleosidase from Sodalis glossinidius (strain morsitans).